The following is a 101-amino-acid chain: Apolipoprotein C-II (101 aa).

Positions 1–22 (MGTRLLPALFLVLLVLGFEVQG) are cleaved as a signal peptide. Positions 23–38 (TQQPQQDEMPSPTFLT) are O-glycosylated at one site. Residues 66–74 (AVDEKLRDL) form a lipid binding region. The interval 78 to 101 (STAAMSTYTGIFTDQVLSVLKGEE) is lipoprotein lipase cofactor.

Belongs to the apolipoprotein C2 family. Proapolipoprotein C-II is synthesized as a sialic acid containing glycoprotein which is subsequently desialylated prior to its proteolytic processing. In terms of processing, proapolipoprotein C-II, the major form found in plasma undergoes proteolytic cleavage of its N-terminal hexapeptide to generate apolipoprotein C-II, which occurs as the minor form in plasma. In terms of tissue distribution, liver and intestine.

The protein resides in the secreted. Component of chylomicrons, very low-density lipoproteins (VLDL), low-density lipoproteins (LDL), and high-density lipoproteins (HDL) in plasma. Plays an important role in lipoprotein metabolism as an activator of lipoprotein lipase. Both proapolipoprotein C-II and apolipoprotein C-II can activate lipoprotein lipase. In normolipidemic individuals, it is mainly distributed in the HDL, whereas in hypertriglyceridemic individuals, predominantly found in the VLDL and LDL. In Homo sapiens (Human), this protein is Apolipoprotein C-II (APOC2).